Consider the following 217-residue polypeptide: Ras-related protein RABA2a (217 aa).

19–26 (GDSGVGKS) is a GTP binding site. Residues 41–49 (SKSTIGVEF) carry the Effector region motif. GTP is bound by residues 67–71 (DTAGQ), 125–128 (NKTD), and 155–156 (SA). Residue cysteine 213 is the site of S-palmitoyl cysteine attachment. A Cysteine methyl ester modification is found at cysteine 214. The S-geranylgeranyl cysteine moiety is linked to residue cysteine 214. The propeptide at 215–217 (SSS) is removed in mature form.

It belongs to the small GTPase superfamily. Rab family. In terms of tissue distribution, expressed in root tips.

Its subcellular location is the endosome membrane. The protein localises to the golgi apparatus. It is found in the trans-Golgi network membrane. Functionally, intracellular vesicle trafficking and protein transport. This is Ras-related protein RABA2a (RABA2A) from Arabidopsis thaliana (Mouse-ear cress).